A 225-amino-acid chain; its full sequence is Mediator of RNA polymerase II transcription subunit 8 (225 aa).

The interval 1–24 (MNSIHSANSNTVSTSEINTSQIPT) is disordered. Residues 170–204 (VEELKYLDSEDEKKETEENKKIENQKYEEELKITA) adopt a coiled-coil conformation.

The protein belongs to the Mediator complex subunit 8 family. As to quaternary structure, component of the Mediator complex.

Its subcellular location is the nucleus. In terms of biological role, component of the Mediator complex, a coactivator involved in the regulated transcription of nearly all RNA polymerase II-dependent genes. Mediator functions as a bridge to convey information from gene-specific regulatory proteins to the basal RNA polymerase II transcription machinery. Mediator is recruited to promoters by direct interactions with regulatory proteins and serves as a scaffold for the assembly of a functional preinitiation complex with RNA polymerase II and the general transcription factors. In Debaryomyces hansenii (strain ATCC 36239 / CBS 767 / BCRC 21394 / JCM 1990 / NBRC 0083 / IGC 2968) (Yeast), this protein is Mediator of RNA polymerase II transcription subunit 8 (MED8).